The following is a 588-amino-acid chain: Adenine deaminase (588 aa).

Belongs to the metallo-dependent hydrolases superfamily. Adenine deaminase family. In terms of assembly, homodimer. It depends on Mn(2+) as a cofactor.

It carries out the reaction adenine + H2O + H(+) = hypoxanthine + NH4(+). This is Adenine deaminase from Escherichia coli O81 (strain ED1a).